A 1099-amino-acid polypeptide reads, in one-letter code: DNA-directed RNA polymerase subunit beta (1099 aa).

It belongs to the RNA polymerase beta chain family. As to quaternary structure, in plastids the minimal PEP RNA polymerase catalytic core is composed of four subunits: alpha, beta, beta', and beta''. When a (nuclear-encoded) sigma factor is associated with the core the holoenzyme is formed, which can initiate transcription.

It localises to the plastid. It is found in the chloroplast. The catalysed reaction is RNA(n) + a ribonucleoside 5'-triphosphate = RNA(n+1) + diphosphate. In terms of biological role, DNA-dependent RNA polymerase catalyzes the transcription of DNA into RNA using the four ribonucleoside triphosphates as substrates. This chain is DNA-directed RNA polymerase subunit beta, found in Bigelowiella natans (Pedinomonas minutissima).